We begin with the raw amino-acid sequence, 489 residues long: WPP domain-interacting protein 1 (489 aa).

Residues serine 49–valine 73 are disordered. 3 consecutive short sequence motifs (nuclear localization signal) follow at residues arginine 80–lysine 81, arginine 83–arginine 84, and lysine 104–arginine 105. The tract at residues proline 195–serine 264 is disordered. Residues glycine 215–asparagine 224 are compositionally biased toward basic and acidic residues. Residues glutamate 323 to isoleucine 446 adopt a coiled-coil conformation. Residues serine 459–threonine 489 enclose the KASH domain. The helical transmembrane segment at tyrosine 460–leucine 480 threads the bilayer.

In terms of assembly, homodimer and heterodimer with WIP2. Component of Ran complexes at least composed of WIT1 or WIT2, RANGAP1 or RANGAP2, and WIP1 or WIP2 or WIP3. Interacts with RANGAP1, RANGAP2, WPP1/MAF1, and WPP2/MAF2. Interacts with SUN1 and SUN2. Interacts with KIN1. Core component of the LINC complex which is composed of inner nuclear membrane SUN domain-containing proteins coupled to outer nuclear membrane WIP and WIT proteins. The LINC complex also involves nucleoskeletal proteins CRWN/LINC and possibly KAKU4 and the cytoskeletal myosin KAKU1. Interacts with WIT1 and SUN2. Interacts with WIT2. Interacts with SUN3. As to expression, expressed in seedlings, roots, stems, leaves, and flowers.

The protein resides in the nucleus envelope. It localises to the nucleus membrane. In terms of biological role, mediates and enhances the nuclear envelope docking of RANGAP proteins mediated by WIT1 and WIT2 in the undifferentiated cells of root tips. As component of the SUN-WIP-WIT2-KAKU1 complex, mediates the transfer of cytoplasmic forces to the nuclear envelope (NE), leading to nuclear shape changes. The polypeptide is WPP domain-interacting protein 1 (WIP1) (Arabidopsis thaliana (Mouse-ear cress)).